Reading from the N-terminus, the 226-residue chain is ATP synthase subunit a (226 aa).

5 helical membrane passes run phenylalanine 17–alanine 37, leucine 79–phenylalanine 99, serine 105–isoleucine 125, phenylalanine 168–valine 188, and methionine 200–valine 222.

The protein belongs to the ATPase A chain family. F-type ATPases have 2 components, CF(1) - the catalytic core - and CF(0) - the membrane proton channel. CF(1) has five subunits: alpha(3), beta(3), gamma(1), delta(1), epsilon(1). CF(0) has three main subunits: a(1), b(2) and c(9-12). The alpha and beta chains form an alternating ring which encloses part of the gamma chain. CF(1) is attached to CF(0) by a central stalk formed by the gamma and epsilon chains, while a peripheral stalk is formed by the delta and b chains.

Its subcellular location is the cell inner membrane. Its function is as follows. Key component of the proton channel; it plays a direct role in the translocation of protons across the membrane. The chain is ATP synthase subunit a from Campylobacter fetus subsp. fetus (strain 82-40).